The chain runs to 255 residues: Trypsin alpha-4 (255 aa).

Residues methionine 1 to glycine 16 form the signal peptide. The propeptide at alanine 17–arginine 30 is activation peptide. The Peptidase S1 domain maps to isoleucine 31–serine 253. Cysteines 56 and 72 form a disulfide. Catalysis depends on charge relay system residues histidine 71 and aspartate 116. Intrachain disulfides connect cysteine 179/cysteine 196 and cysteine 205/cysteine 229. Serine 209 serves as the catalytic Charge relay system.

It belongs to the peptidase S1 family.

The protein resides in the secreted. Its subcellular location is the extracellular space. It catalyses the reaction Preferential cleavage: Arg-|-Xaa, Lys-|-Xaa.. In Lucilia cuprina (Green bottle fly), this protein is Trypsin alpha-4.